The sequence spans 331 residues: Anthranilate phosphoribosyltransferase (331 aa).

5-phospho-alpha-D-ribose 1-diphosphate-binding positions include Gly-78, 81–82 (GD), Ser-86, 88–91 (NIST), 106–114 (KHGNKSITS), and Ser-118. An anthranilate-binding site is contributed by Gly-78. Ser-90 is a binding site for Mg(2+). Anthranilate is bound at residue Asn-109. Residue Arg-163 coordinates anthranilate. 2 residues coordinate Mg(2+): Asp-222 and Glu-223.

It belongs to the anthranilate phosphoribosyltransferase family. In terms of assembly, homodimer. Mg(2+) is required as a cofactor.

It catalyses the reaction N-(5-phospho-beta-D-ribosyl)anthranilate + diphosphate = 5-phospho-alpha-D-ribose 1-diphosphate + anthranilate. The protein operates within amino-acid biosynthesis; L-tryptophan biosynthesis; L-tryptophan from chorismate: step 2/5. Its function is as follows. Catalyzes the transfer of the phosphoribosyl group of 5-phosphorylribose-1-pyrophosphate (PRPP) to anthranilate to yield N-(5'-phosphoribosyl)-anthranilate (PRA). This is Anthranilate phosphoribosyltransferase from Staphylococcus epidermidis (strain ATCC 35984 / DSM 28319 / BCRC 17069 / CCUG 31568 / BM 3577 / RP62A).